The sequence spans 478 residues: ATP synthase subunit beta (478 aa).

160–167 provides a ligand contact to ATP; that stretch reads GGAGVGKT.

The protein belongs to the ATPase alpha/beta chains family. F-type ATPases have 2 components, CF(1) - the catalytic core - and CF(0) - the membrane proton channel. CF(1) has five subunits: alpha(3), beta(3), gamma(1), delta(1), epsilon(1). CF(0) has three main subunits: a(1), b(2) and c(9-12). The alpha and beta chains form an alternating ring which encloses part of the gamma chain. CF(1) is attached to CF(0) by a central stalk formed by the gamma and epsilon chains, while a peripheral stalk is formed by the delta and b chains.

The protein localises to the cell inner membrane. It carries out the reaction ATP + H2O + 4 H(+)(in) = ADP + phosphate + 5 H(+)(out). Its function is as follows. Produces ATP from ADP in the presence of a proton gradient across the membrane. The catalytic sites are hosted primarily by the beta subunits. In Orientia tsutsugamushi (strain Boryong) (Rickettsia tsutsugamushi), this protein is ATP synthase subunit beta.